Consider the following 420-residue polypeptide: Glucose-1-phosphate adenylyltransferase (420 aa).

Alpha-D-glucose 1-phosphate is bound by residues tyrosine 107, glycine 172, 187–188 (EK), and serine 205.

This sequence belongs to the bacterial/plant glucose-1-phosphate adenylyltransferase family. Homotetramer.

The enzyme catalyses alpha-D-glucose 1-phosphate + ATP + H(+) = ADP-alpha-D-glucose + diphosphate. It participates in glycan biosynthesis; glycogen biosynthesis. Its function is as follows. Involved in the biosynthesis of ADP-glucose, a building block required for the elongation reactions to produce glycogen. Catalyzes the reaction between ATP and alpha-D-glucose 1-phosphate (G1P) to produce pyrophosphate and ADP-Glc. This is Glucose-1-phosphate adenylyltransferase from Rhodopseudomonas palustris (strain HaA2).